A 236-amino-acid chain; its full sequence is Peptidase E (236 aa).

Active-site charge relay system residues include serine 122, aspartate 137, and histidine 159.

It belongs to the peptidase S51 family.

The protein localises to the cytoplasm. The catalysed reaction is Dipeptidase E catalyzes the hydrolysis of dipeptides Asp-|-Xaa. It does not act on peptides with N-terminal Glu, Asn or Gln, nor does it cleave isoaspartyl peptides.. In terms of biological role, hydrolyzes dipeptides containing N-terminal aspartate residues. May play a role in allowing the cell to use peptide aspartate to spare carbon otherwise required for the synthesis of the aspartate family of amino acids. The protein is Peptidase E of Shewanella oneidensis (strain ATCC 700550 / JCM 31522 / CIP 106686 / LMG 19005 / NCIMB 14063 / MR-1).